The following is a 48-amino-acid chain: Cytochrome b559 subunit beta (48 aa).

The helical transmembrane segment at Trp-23–Ala-39 threads the bilayer. His-27 contributes to the heme binding site.

This sequence belongs to the PsbE/PsbF family. As to quaternary structure, heterodimer of an alpha subunit and a beta subunit. PSII is composed of 1 copy each of membrane proteins PsbA, PsbB, PsbC, PsbD, PsbE, PsbF, PsbH, PsbI, PsbJ, PsbK, PsbL, PsbM, PsbT, PsbX, PsbY, Psb30/Ycf12, peripheral proteins PsbO, CyanoQ (PsbQ), PsbU, PsbV and a large number of cofactors. It forms dimeric complexes. It depends on heme b as a cofactor.

The protein localises to the cellular thylakoid membrane. This b-type cytochrome is tightly associated with the reaction center of photosystem II (PSII). PSII is a light-driven water:plastoquinone oxidoreductase that uses light energy to abstract electrons from H(2)O, generating O(2) and a proton gradient subsequently used for ATP formation. It consists of a core antenna complex that captures photons, and an electron transfer chain that converts photonic excitation into a charge separation. The polypeptide is Cytochrome b559 subunit beta (Prochlorococcus marinus (strain MIT 9515)).